A 283-amino-acid polypeptide reads, in one-letter code: Thymidylate synthase (283 aa).

R22 serves as a coordination point for dUMP. The active-site Nucleophile is C160. DUMP is bound by residues 180-183 (RSCD), N191, and 221-223 (HIY). D183 contributes to the (6R)-5,10-methylene-5,6,7,8-tetrahydrofolate binding site. S282 is a (6R)-5,10-methylene-5,6,7,8-tetrahydrofolate binding site.

This sequence belongs to the thymidylate synthase family. Bacterial-type ThyA subfamily. As to quaternary structure, homodimer.

The protein localises to the cytoplasm. The catalysed reaction is dUMP + (6R)-5,10-methylene-5,6,7,8-tetrahydrofolate = 7,8-dihydrofolate + dTMP. Its pathway is pyrimidine metabolism; dTTP biosynthesis. Its function is as follows. Catalyzes the reductive methylation of 2'-deoxyuridine-5'-monophosphate (dUMP) to 2'-deoxythymidine-5'-monophosphate (dTMP) while utilizing 5,10-methylenetetrahydrofolate (mTHF) as the methyl donor and reductant in the reaction, yielding dihydrofolate (DHF) as a by-product. This enzymatic reaction provides an intracellular de novo source of dTMP, an essential precursor for DNA biosynthesis. The polypeptide is Thymidylate synthase (Shewanella pealeana (strain ATCC 700345 / ANG-SQ1)).